The following is a 119-amino-acid chain: Large ribosomal subunit protein uL22c (119 aa).

Belongs to the universal ribosomal protein uL22 family. Part of the 50S ribosomal subunit.

Its subcellular location is the plastid. It is found in the chloroplast. Its function is as follows. This protein binds specifically to 23S rRNA. The globular domain of the protein is located near the polypeptide exit tunnel on the outside of the subunit, while an extended beta-hairpin is found that lines the wall of the exit tunnel in the center of the 70S ribosome. The sequence is that of Large ribosomal subunit protein uL22c (rpl22) from Anthoceros angustus (Hornwort).